A 274-amino-acid polypeptide reads, in one-letter code: Penicillin-insensitive murein endopeptidase (274 aa).

The N-terminal stretch at 1-19 (MKKTAIALLAWFVSSASLA) is a signal peptide. Disulfide bonds link Cys44/Cys265, Cys187/Cys235, and Cys216/Cys223. The Zn(2+) site is built by His110, His113, Asp120, Asp147, and His150. Residues 225–274 (DQPLPPPGDGCGAELQSWFEPPKPGTTKPEKKTPPPLPPSCQALLDEHVL) are disordered.

This sequence belongs to the peptidase M74 family. In terms of assembly, dimer. The cofactor is Zn(2+).

It is found in the periplasm. In terms of biological role, murein endopeptidase that cleaves the D-alanyl-meso-2,6-diamino-pimelyl amide bond that connects peptidoglycan strands. Likely plays a role in the removal of murein from the sacculus. The protein is Penicillin-insensitive murein endopeptidase of Salmonella paratyphi A (strain ATCC 9150 / SARB42).